A 200-amino-acid chain; its full sequence is Imidazoleglycerol-phosphate dehydratase (200 aa).

It belongs to the imidazoleglycerol-phosphate dehydratase family.

The protein resides in the cytoplasm. It catalyses the reaction D-erythro-1-(imidazol-4-yl)glycerol 3-phosphate = 3-(imidazol-4-yl)-2-oxopropyl phosphate + H2O. The protein operates within amino-acid biosynthesis; L-histidine biosynthesis; L-histidine from 5-phospho-alpha-D-ribose 1-diphosphate: step 6/9. This chain is Imidazoleglycerol-phosphate dehydratase, found in Chlorobium phaeobacteroides (strain BS1).